A 441-amino-acid polypeptide reads, in one-letter code: Nuclear distribution protein nudF (441 aa).

In terms of domain architecture, LisH spans 9–41; it reads QAEELHKSIIAYLASVNLTESSAALRAELGDSV. WD repeat units lie at residues 87-128, 130-170, 174-221, 224-263, 266-326, 328-367, 372-402, and 403-440; these read GHRE…RTVK, HTKA…KNIR, GHDH…CVKT, GHVDWVRAVAPSLDGRFLFAAGDDRIPRLWDLSSAETKST, GHEH…IKTL, GHDNWVRALAFHPGGKHLLSVADDKTIRCWDLTQECKCVR, AHGHFVTCLRWAPPLIKDGGANGESETNGAP, and AATATTNGVRPDPNAANKISIRCVIATGSVDRKVRIFA. The tract at residues 390–415 is disordered; sequence GGANGESETNGAPAATATTNGVRPDP. Residues 398-410 show a composition bias toward low complexity; the sequence is TNGAPAATATTNG.

The protein belongs to the WD repeat LIS1/nudF family. Self-associates. Interacts with nudE and dynein.

Its subcellular location is the cytoplasm. It is found in the cytoskeleton. It localises to the spindle pole. Its function is as follows. Positively regulates the activity of the minus-end directed microtubule motor protein dynein. May enhance dynein-mediated microtubule sliding by targeting dynein to the microtubule plus end. Required for nuclear migration during vegetative growth as well as development. Required for retrograde early endosome (EE) transport from the hyphal tip. Required for localization of dynein to the mitotic spindle poles. Recruits additional proteins to the dynein complex at SPBs. The protein is Nuclear distribution protein nudF of Neosartorya fischeri (strain ATCC 1020 / DSM 3700 / CBS 544.65 / FGSC A1164 / JCM 1740 / NRRL 181 / WB 181) (Aspergillus fischerianus).